The chain runs to 340 residues: Centromere protein N (340 aa).

Residues S227 and S236 each carry the phosphoserine modification.

This sequence belongs to the CENP-N/CHL4 family. As to quaternary structure, component of the CENPA-NAC complex, at least composed of CENPA, CENPC, CENPH, CENPM, CENPN, CENPT and CENPU. The CENPA-NAC complex interacts with the CENPA-CAD complex, composed of CENPI, CENPK, CENPL, CENPO, CENPP, CENPQ, CENPR and CENPS. Interacts directly with CENPA. Identified in a centromere complex containing histones H2A, H2B and H4, and at least CENPA, CENPB, CENPC, CENPT, CENPN, HJURP, SUPT16H, SSRP1 and RSF1.

It is found in the nucleus. The protein localises to the chromosome. It localises to the centromere. Its subcellular location is the kinetochore. Its function is as follows. Component of the CENPA-NAC (nucleosome-associated) complex, a complex that plays a central role in assembly of kinetochore proteins, mitotic progression and chromosome segregation. The CENPA-NAC complex recruits the CENPA-CAD (nucleosome distal) complex and may be involved in incorporation of newly synthesized CENPA into centromeres. CENPN is the first protein to bind specifically to CENPA nucleosomes and the direct binding of CENPA nucleosomes by CENPN is required for centromere assembly. Required for chromosome congression and efficiently align the chromosomes on a metaphase plate. The sequence is that of Centromere protein N (Cenpn) from Rattus norvegicus (Rat).